A 351-amino-acid chain; its full sequence is UDP-3-O-acylglucosamine N-acyltransferase (351 aa).

The active-site Proton acceptor is histidine 240.

This sequence belongs to the transferase hexapeptide repeat family. LpxD subfamily. In terms of assembly, homotrimer.

The enzyme catalyses a UDP-3-O-[(3R)-3-hydroxyacyl]-alpha-D-glucosamine + a (3R)-hydroxyacyl-[ACP] = a UDP-2-N,3-O-bis[(3R)-3-hydroxyacyl]-alpha-D-glucosamine + holo-[ACP] + H(+). Its pathway is bacterial outer membrane biogenesis; LPS lipid A biosynthesis. In terms of biological role, catalyzes the N-acylation of UDP-3-O-acylglucosamine using 3-hydroxyacyl-ACP as the acyl donor. Is involved in the biosynthesis of lipid A, a phosphorylated glycolipid that anchors the lipopolysaccharide to the outer membrane of the cell. In Pseudomonas fluorescens (strain SBW25), this protein is UDP-3-O-acylglucosamine N-acyltransferase.